A 236-amino-acid polypeptide reads, in one-letter code: uncharacterized protein (236 aa).

In terms of domain architecture, ABC transporter spans 4–225 (LLEASIEQAG…TGLEGQSLLD (222 aa)). An ATP-binding site is contributed by 38 to 45 (GANGAGKS).

Belongs to the ABC transporter superfamily.

This is an uncharacterized protein from Bacillus subtilis (strain 168).